A 303-amino-acid polypeptide reads, in one-letter code: Mevalonate kinase (303 aa).

ATP is bound at residue 90–100; that stretch reads PAGSGLGSSAA. Asp-141 functions as the Proton acceptor in the catalytic mechanism.

Belongs to the GHMP kinase family. Mevalonate kinase subfamily. As to quaternary structure, homodimer. Requires Mg(2+) as cofactor.

It is found in the cytoplasm. The enzyme catalyses (R)-mevalonate + ATP = (R)-5-phosphomevalonate + ADP + H(+). It participates in isoprenoid biosynthesis; isopentenyl diphosphate biosynthesis via mevalonate pathway; isopentenyl diphosphate from (R)-mevalonate: step 1/3. Functionally, catalyzes the phosphorylation of (R)-mevalonate (MVA) to (R)-mevalonate 5-phosphate (MVAP). Functions in the mevalonate (MVA) pathway leading to isopentenyl diphosphate (IPP), a key precursor for the biosynthesis of isoprenoid compounds such as archaeal membrane lipids. This Methanothermobacter thermautotrophicus (strain ATCC 29096 / DSM 1053 / JCM 10044 / NBRC 100330 / Delta H) (Methanobacterium thermoautotrophicum) protein is Mevalonate kinase.